Reading from the N-terminus, the 178-residue chain is uncharacterized protein (178 aa).

Residues 1-19 form the signal peptide; sequence MKKNIHILGASGVGTSTLG.

This is an uncharacterized protein from Bacillus subtilis (strain 168).